Consider the following 116-residue polypeptide: Protein Rev (116 aa).

Residues Ser-5 and Ser-8 each carry the phosphoserine; by host CK2 modification. Residues 18-26 form a homomultimerization region; the sequence is LIKFLYQSN. Positions 23–49 are disordered; sequence YQSNPPPNPEGTRQARRNRRRRWRERQ. The short motif at 34–50 is the Nuclear localization signal and RNA-binding (RRE) element; that stretch reads TRQARRNRRRRWRERQR. Residues 36 to 47 show a composition bias toward basic residues; that stretch reads QARRNRRRRWRE. The short motif at 73 to 84 is the Nuclear export signal and binding to XPO1 element; the sequence is LQLPPLERLTLD. 2 positions are modified to phosphoserine; by host: Ser-92 and Ser-99.

This sequence belongs to the HIV-1 REV protein family. In terms of assembly, homomultimer; when bound to the RRE. Multimeric assembly is essential for activity and may involve XPO1. Binds to human KPNB1, XPO1, TNPO1, RANBP5 and IPO7. Interacts with the viral Integrase. Interacts with human KHDRBS1. Interacts with human NAP1; this interaction decreases Rev multimerization and stimulates its activity. Interacts with human DEAD-box helicases DDX3 and DDX24; these interactions may serve for viral RNA export to the cytoplasm and packaging, respectively. Interacts with human PSIP1; this interaction may inhibit HIV-1 DNA integration by promoting dissociation of the Integrase-LEDGF/p75 complex. Post-translationally, asymmetrically arginine dimethylated at one site by host PRMT6. Methylation impairs the RNA-binding activity and export of viral RNA from the nucleus to the cytoplasm. Phosphorylated by protein kinase CK2. Presence of, and maybe binding to the N-terminus of the regulatory beta subunit of CK2 is necessary for CK2-mediated Rev's phosphorylation.

The protein localises to the host nucleus. The protein resides in the host nucleolus. It is found in the host cytoplasm. In terms of biological role, escorts unspliced or incompletely spliced viral pre-mRNAs (late transcripts) out of the nucleus of infected cells. These pre-mRNAs carry a recognition sequence called Rev responsive element (RRE) located in the env gene, that is not present in fully spliced viral mRNAs (early transcripts). This function is essential since most viral proteins are translated from unspliced or partially spliced pre-mRNAs which cannot exit the nucleus by the pathway used by fully processed cellular mRNAs. Rev itself is translated from a fully spliced mRNA that readily exits the nucleus. Rev's nuclear localization signal (NLS) binds directly to KPNB1/Importin beta-1 without previous binding to KPNA1/Importin alpha-1. KPNB1 binds to the GDP bound form of RAN (Ran-GDP) and targets Rev to the nucleus. In the nucleus, the conversion from Ran-GDP to Ran-GTP dissociates Rev from KPNB1 and allows Rev's binding to the RRE in viral pre-mRNAs. Rev multimerization on the RRE via cooperative assembly exposes its nuclear export signal (NES) to the surface. Rev can then form a complex with XPO1/CRM1 and Ran-GTP, leading to nuclear export of the complex. Conversion from Ran-GTP to Ran-GDP mediates dissociation of the Rev/RRE/XPO1/RAN complex, so that Rev can return to the nucleus for a subsequent round of export. Beside KPNB1, also seems to interact with TNPO1/Transportin-1, RANBP5/IPO5 and IPO7/RANBP7 for nuclear import. The nucleoporin-like HRB/RIP is an essential cofactor that probably indirectly interacts with Rev to release HIV RNAs from the perinuclear region to the cytoplasm. This is Protein Rev from Human immunodeficiency virus type 1 group M subtype B (isolate PCV12) (HIV-1).